Reading from the N-terminus, the 270-residue chain is B3 domain-containing protein Os03g0212300 (270 aa).

2 DNA-binding regions (TF-B3) span residues 13–110 (FEFF…FDET) and 158–265 (VTLR…RKAD).

The protein localises to the nucleus. In Oryza sativa subsp. japonica (Rice), this protein is B3 domain-containing protein Os03g0212300.